Reading from the N-terminus, the 408-residue chain is Homogentisate geranylgeranyltransferase (408 aa).

The N-terminal 68 residues, 1-68, are a transit peptide targeting the chloroplast; sequence MQATTAAAAA…SAISQATSPR (68 aa). A run of 9 helical transmembrane segments spans residues 122–142, 149–169, 194–214, 217–237, 248–268, 286–306, 329–349, 352–372, and 386–406; these read HTIF…MKSI, VLKG…YVVG, SVAT…SIGI, GSVP…AYSI, ALLA…LAFF, LVFA…FKDI, VYQL…VVGA, THLL…LTLW, and VTSF…LIPF.

Belongs to the UbiA prenyltransferase family.

The protein resides in the plastid. It localises to the chloroplast membrane. The enzyme catalyses homogentisate + (2E,6E,10E)-geranylgeranyl diphosphate + H(+) = 6-geranylgeranyl-2-methylbenzene-1,4-diol + CO2 + diphosphate. The protein operates within cofactor biosynthesis; tocopherol biosynthesis. Involved in the synthesis of tocotrienol (vitamin E). Catalyzes the condensation of homogentisate and geranylgeranyl diphosphate to form 2-methyl-6-geranylgeranylbenzoquinol. Possesses low activity with phytyl diphosphate as substrate. This Triticum aestivum (Wheat) protein is Homogentisate geranylgeranyltransferase.